The chain runs to 545 residues: MSKYIFVTGGVLSSLGKGITSASIATLLQHSGFKVSMVKIDPYINVDPGTMSPFEHGEVFVTEDGAETDLDIGNYERFLNTNLGKKNNFTTGQIYLSVIEKERRGDYLGKTVQIIPHITDEIKRRIKEVAKDVDIVVVELGGTVGDIEGLPFLEAVRQLKHEVGKTNAMFVHVTLIPYIKAAGELKTKPTQHSVQELRRIGITPHMLVCRTEKPLPKALKEKLADSCDIERDAVIEAVDAPTVYQVPLNFLNQDILVPIAKQLDLGDLHPDMTEWNFIVKKIISPQKSVKIAFVGKYLQLKESYKSLIEALIHSGAHLDMKVDIEWIDSEDLEKADDEKLDEIFNEVSGILVAGGFGERGVEGKLKAIKYARENKIPYLGICLGMQLAVIEFARNVLGLEYANSQEFDPDTPEPVVYLIDEFIDASGQKQLRTHKSPLGGTMRLGGYECFVKKGTKLYDAYKSDKVIERHRHRYEVNGAYEDALKEKGMIVSGKSVEGLVEAVELKDHPWFVAVQFHPEFTNKLKSPNKVIMSFVENAYKCQRSC.

Residues 1–265 form an amidoligase domain region; the sequence is MSKYIFVTGG…LVPIAKQLDL (265 aa). Ser-13 is a binding site for CTP. Residue Ser-13 coordinates UTP. ATP is bound by residues 14–19 and Asp-71; that span reads SLGKGI. Residues Asp-71 and Glu-139 each contribute to the Mg(2+) site. CTP-binding positions include 146-148, 186-191, and Lys-222; these read DIE and KTKPTQ. Residues 186-191 and Lys-222 contribute to the UTP site; that span reads KTKPTQ. The 255-residue stretch at 290–544 folds into the Glutamine amidotransferase type-1 domain; the sequence is KIAFVGKYLQ…VENAYKCQRS (255 aa). Position 355 (Gly-355) interacts with L-glutamine. Cys-382 functions as the Nucleophile; for glutamine hydrolysis in the catalytic mechanism. L-glutamine contacts are provided by residues 383-386, Glu-406, and Arg-473; that span reads LGMQ. Catalysis depends on residues His-517 and Glu-519.

The protein belongs to the CTP synthase family. In terms of assembly, homotetramer.

It carries out the reaction UTP + L-glutamine + ATP + H2O = CTP + L-glutamate + ADP + phosphate + 2 H(+). It catalyses the reaction L-glutamine + H2O = L-glutamate + NH4(+). The enzyme catalyses UTP + NH4(+) + ATP = CTP + ADP + phosphate + 2 H(+). Its pathway is pyrimidine metabolism; CTP biosynthesis via de novo pathway; CTP from UDP: step 2/2. Its activity is regulated as follows. Allosterically activated by GTP, when glutamine is the substrate; GTP has no effect on the reaction when ammonia is the substrate. The allosteric effector GTP functions by stabilizing the protein conformation that binds the tetrahedral intermediate(s) formed during glutamine hydrolysis. Inhibited by the product CTP, via allosteric rather than competitive inhibition. Catalyzes the ATP-dependent amination of UTP to CTP with either L-glutamine or ammonia as the source of nitrogen. Regulates intracellular CTP levels through interactions with the four ribonucleotide triphosphates. The protein is CTP synthase of Nautilia profundicola (strain ATCC BAA-1463 / DSM 18972 / AmH).